A 778-amino-acid polypeptide reads, in one-letter code: Protein PHOTOPERIODIC CONTROL OF HYPOCOTYL 1 (778 aa).

Disordered regions lie at residues 74-95, 186-283, and 316-335; these read QKRE…VGSS, HNRG…NSAT, and KTSP…KEAS. Residues 198-212 are compositionally biased toward basic and acidic residues; sequence SSKDTQEDGPRKNES. The segment covering 230-247 has biased composition (low complexity); the sequence is SGSISSSSTKGKGIKGYS. Residues 265–275 are compositionally biased toward basic and acidic residues; the sequence is PDRENSVDGHQ. The span at 317-326 shows a compositional bias: polar residues; that stretch reads TSPSDSSETK. Residues 470 to 505 enclose the F-box domain; it reads WPLLPNDLLELIMGHLETSFEIFLFRSVCSSWRSVV.

In terms of assembly, interacts with light-activated phyB. Binds directly to PIF1 and COP1. Ubiquitinated by COP1 in darkness; this leads to proteasomal degradation. As to expression, mainly expressed in cotyledons, hypocotyls, leaves and roots.

Its subcellular location is the nucleus. Functionally, together with PCHL, regulates growth and development adaptation to the ambient environment by controlling negatively phytochrome B (phyB) dark reversion, a temperature-dependent thermal relaxation process during which phyB reverts from the active to the inactive state. Contributes to red (R) light-triggered photomorphogenesis. Promotes various light responses such as seed germination, hypocotyl gravitropism and chlorophyll biosynthesis, via direct interaction with PIF1 and COP1. Prevents DNA-binding ability of PIF1 to negatively regulate the expressions of its target genes. Facilitates the physical interaction between phyB and PIF1 and the subsequent light-induced degradation of PIF1. The chain is Protein PHOTOPERIODIC CONTROL OF HYPOCOTYL 1 from Arabidopsis thaliana (Mouse-ear cress).